A 470-amino-acid polypeptide reads, in one-letter code: Uronate isomerase (470 aa).

The protein belongs to the metallo-dependent hydrolases superfamily. Uronate isomerase family.

The catalysed reaction is D-glucuronate = D-fructuronate. It catalyses the reaction aldehydo-D-galacturonate = keto-D-tagaturonate. It participates in carbohydrate metabolism; pentose and glucuronate interconversion. In Serratia proteamaculans (strain 568), this protein is Uronate isomerase.